A 200-amino-acid polypeptide reads, in one-letter code: Peptidyl-tRNA hydrolase (200 aa).

Position 15 (Tyr-15) interacts with tRNA. Catalysis depends on His-20, which acts as the Proton acceptor. 3 residues coordinate tRNA: Phe-66, Asn-68, and Asn-114.

This sequence belongs to the PTH family. In terms of assembly, monomer.

It is found in the cytoplasm. The catalysed reaction is an N-acyl-L-alpha-aminoacyl-tRNA + H2O = an N-acyl-L-amino acid + a tRNA + H(+). In terms of biological role, hydrolyzes ribosome-free peptidyl-tRNAs (with 1 or more amino acids incorporated), which drop off the ribosome during protein synthesis, or as a result of ribosome stalling. Catalyzes the release of premature peptidyl moieties from peptidyl-tRNA molecules trapped in stalled 50S ribosomal subunits, and thus maintains levels of free tRNAs and 50S ribosomes. This chain is Peptidyl-tRNA hydrolase, found in Ralstonia pickettii (strain 12J).